We begin with the raw amino-acid sequence, 279 residues long: Orotidine 5'-phosphate decarboxylase (279 aa).

Residues Asp-8, Lys-30, 58-67 (DLKIHDIPNT), Thr-117, Arg-177, Gln-186, Gly-206, and Arg-207 contribute to the substrate site. Residue Lys-60 is the Proton donor of the active site.

Belongs to the OMP decarboxylase family. Type 1 subfamily. In terms of assembly, homodimer.

It carries out the reaction orotidine 5'-phosphate + H(+) = UMP + CO2. It functions in the pathway pyrimidine metabolism; UMP biosynthesis via de novo pathway; UMP from orotate: step 2/2. In terms of biological role, catalyzes the decarboxylation of orotidine 5'-monophosphate (OMP) to uridine 5'-monophosphate (UMP). The sequence is that of Orotidine 5'-phosphate decarboxylase from Campylobacter jejuni (strain RM1221).